A 156-amino-acid polypeptide reads, in one-letter code: Small ribosomal subunit protein uS7 (156 aa).

Belongs to the universal ribosomal protein uS7 family. Part of the 30S ribosomal subunit. Contacts proteins S9 and S11.

Its function is as follows. One of the primary rRNA binding proteins, it binds directly to 16S rRNA where it nucleates assembly of the head domain of the 30S subunit. Is located at the subunit interface close to the decoding center, probably blocks exit of the E-site tRNA. This chain is Small ribosomal subunit protein uS7, found in Streptococcus uberis (strain ATCC BAA-854 / 0140J).